Here is a 321-residue protein sequence, read N- to C-terminus: High osmolarity signaling protein SHO1A (321 aa).

Residues 1–28 (MDYNNNRYGGGGGGSKFNLGHIVGDPFS) lie on the Cytoplasmic side of the membrane. Residues 29-49 (LATIAIATAGWLIAFVSSIIA) traverse the membrane as a helical segment. Residues 50-58 (NIDQEYPNY) are Extracellular-facing. A glycan (N-linked (GlcNAc...) asparagine) is linked at N57. Residues 59 to 79 (SWWALAYMFFVILGVTFAVAA) traverse the membrane as a helical segment. Position 80 (N80) is a topological domain, cytoplasmic. The chain crosses the membrane as a helical span at residues 81-101 (AVYTYHVAMVGFLAAGLVFTT). The Extracellular segment spans residues 102–116 (SSVNSLIYWSDKAKQ). Residues 117 to 137 (AAAAGFILLSMVSIVWIFYFG) traverse the membrane as a helical segment. At 138–321 (SQPTASHRQT…IAPSNYLILL (184 aa)) the chain is on the cytoplasmic side. 2 disordered regions span residues 155–181 (KDHAPSRASRHMTQSYRPETTHSAQHP) and 194–261 (TSSP…QQPT). Composition is skewed to polar residues over residues 165–181 (HMTQSYRPETTHSAQHP) and 225–237 (NFSNNQQPNPITS). Positions 238–249 (QNNPQNQHQQPQ) are enriched in low complexity. Residues 250-261 (DLTSPSTTQQPT) show a composition bias toward polar residues. The region spanning 262–321 (EYPYRAKAIYSYEANPDDANEISFNKHEILEVSDVSGRWWQAKKENGETGIAPSNYLILL) is the SH3 domain.

The protein belongs to the SHO1 family. As to quaternary structure, forms homooligomers.

It localises to the cell membrane. Plasma membrane osmosensor that activates the high osmolarity glycerol (HOG) MAPK signaling pathway in response to high osmolarity. The polypeptide is High osmolarity signaling protein SHO1A (SHO1A) (Hortaea werneckii).